Here is a 497-residue protein sequence, read N- to C-terminus: uncharacterized protein (497 aa).

The span at M1–Q16 shows a compositional bias: polar residues. Positions M1–T29 are disordered. S64 is subject to Phosphoserine. A run of 6 helical transmembrane segments spans residues I86 to I106, F120 to L140, F155 to A175, W180 to Y200, L222 to A242, and A258 to F278. The residue at position 295 (S295) is a Phosphoserine. 6 helical membrane-spanning segments follow: residues F309 to Q329, G348 to L368, I377 to A397, F407 to L427, V443 to F463, and V468 to L488.

It is found in the membrane. This is an uncharacterized protein from Schizosaccharomyces pombe (strain 972 / ATCC 24843) (Fission yeast).